The chain runs to 90 residues: Small ribosomal subunit protein bS20 (90 aa).

The segment at 1–25 is disordered; it reads MANSAQARKRARQAAKANSHNSALR.

This sequence belongs to the bacterial ribosomal protein bS20 family.

Binds directly to 16S ribosomal RNA. The chain is Small ribosomal subunit protein bS20 from Burkholderia multivorans (strain ATCC 17616 / 249).